We begin with the raw amino-acid sequence, 683 residues long: Solute carrier organic anion transporter family member 2B1 (683 aa).

The segment at 1–30 is disordered; it reads MPDRSTKTTMGTEDMHERKVSVEPQDSHQD. Over 1–41 the chain is Cytoplasmic; sequence MPDRSTKTTMGTEDMHERKVSVEPQDSHQDAQPRGMFHNIK. Positions 13–30 are enriched in basic and acidic residues; that stretch reads EDMHERKVSVEPQDSHQD. S21 carries the phosphoserine modification. The chain crosses the membrane as a helical span at residues 42–61; sequence FFVLCHSLLQLTQLMISGYL. At 62–80 the chain is on the extracellular side; it reads KSSISTVEKRFGLSSQISG. The chain crosses the membrane as a helical span at residues 81 to 101; the sequence is LLAAFNEVGNVSLILFVSYFG. Topologically, residues 102–107 are cytoplasmic; that stretch reads SRVHRP. The chain crosses the membrane as a helical span at residues 108-132; the sequence is RMIGYGALLVATAGLLMALPHFISE. The Extracellular segment spans residues 133-177; sequence PYRYDHSSSDNRSLDFEASLCLPTTMAPASALSNGSCSSHTETKH. Residues N143 and N166 are each glycosylated (N-linked (GlcNAc...) asparagine). Residues 178–207 traverse the membrane as a helical segment; sequence LTMVGIMFAAQTLLGIGGVPIQPFGISYID. Residues 208–226 lie on the Cytoplasmic side of the membrane; sequence DFAHHSNSPLYIGILFGIT. Residues 227–247 traverse the membrane as a helical segment; that stretch reads TMGPGLAYGLGSLMLRLYVDI. The Extracellular segment spans residues 248 to 265; it reads DRMPEGGINLTPKDPRWV. Residues 266–290 traverse the membrane as a helical segment; the sequence is GAWWLGFLISSGLVVLASSPYFFFP. The Cytoplasmic segment spans residues 291–355; it reads REMPKEKHEF…VKVFPRVLLR (65 aa). Phosphoserine occurs at positions 312 and 315. The helical transmembrane segment at 356–377 threads the bilayer; it reads NLRHPIFLLVVLSQVCTSSMVA. At 378–397 the chain is on the extracellular side; it reads GMATFLPKFLERQFSITASF. Residues 398–421 form a helical membrane-spanning segment; the sequence is ANMLLGCLTIPLVIVGIMMGGVLV. The Cytoplasmic segment spans residues 422-425; that stretch reads KRLH. The helical transmembrane segment at 426–449 threads the bilayer; that stretch reads LSPVQCSALCLLGSLLCLLFSVPL. Topologically, residues 450–553 are extracellular; it reads FFIGCSTHQI…SACSRLVLPF (104 aa). A Kazal-like domain is found at 472-532; the sequence is PSLFPGCSEP…VFYTNCSCVA (61 aa). Disulfide bonds link C478-C509, C484-C505, and C493-C530. 2 N-linked (GlcNAc...) asparagine glycosylation sites follow: N527 and N534. A helical transmembrane segment spans residues 554–576; sequence IVLFSLGAGLASITHTPSFMLIL. At 577–585 the chain is on the cytoplasmic side; sequence RGVKKEDKT. A helical transmembrane segment spans residues 586–611; the sequence is LAVGMQFMLLRVLAWMPSPVIHGSAI. Residues 612-644 lie on the Extracellular side of the membrane; the sequence is DTTCVHWALTCGRRAVCRYYDHDLLRNRFIGLQ. The chain crosses the membrane as a helical span at residues 645-662; that stretch reads FFFKSGSLVCFTLVLAIL. Over 663 to 683 the chain is Cytoplasmic; it reads RQQSREASTRTTVKSSELQQL.

The protein belongs to the organo anion transporter (TC 2.A.60) family. In terms of tissue distribution, expressed in liver, kidney, small intestine mucosa, large intestine, brain, lung, spleen, stomach and heart.

It is found in the cell membrane. The protein resides in the basal cell membrane. It localises to the apical cell membrane. The enzyme catalyses dehydroepiandrosterone 3-sulfate(out) = dehydroepiandrosterone 3-sulfate(in). It catalyses the reaction estrone 3-sulfate(out) = estrone 3-sulfate(in). The catalysed reaction is estrone 3-sulfate(out) + hydrogencarbonate(in) = estrone 3-sulfate(in) + hydrogencarbonate(out). It carries out the reaction taurocholate(out) = taurocholate(in). The enzyme catalyses coproporphyrin III(out) = coproporphyrin III(in). It catalyses the reaction substance P(out) = substance P(in). The catalysed reaction is pregnenolone sulfate(out) = pregnenolone sulfate(in). It carries out the reaction prostaglandin E2(out) = prostaglandin E2(in). The enzyme catalyses prostaglandin D2(out) = prostaglandin D2(in). It catalyses the reaction L-thyroxine(out) = L-thyroxine(in). Mediates the Na(+)-independent transport of steroid sulfate conjugates such as estrone 3-sulfate (E1S), dehydroepiandrosterone sulfate (DHEA-S) and pregnenolone sulfate (PregS) and other specific organic anions. Responsible for the transport of E1S through the basal membrane of syncytiotrophoblast, highlighting a potential role in the placental absorption of fetal-derived sulfated steroids including DHEA-S. Also facilitates the uptake of sulfated steroids at the basal/sinusoidal membrane of hepatocytes, therefore accounting for the major part of organic anions clearance of liver. Mediates the intestinal uptake of sulfated steroids. Mediates the uptake of the neurosteroids DHEA-S and PregS into the endothelial cells of the blood-brain barrier as the first step to enter the brain. Also plays a role in the reuptake of neuropeptides such as substance P/TAC1 and vasoactive intestinal peptide/VIP released from retinal neurons. May act as a heme transporter that promotes cellular iron availability. Also transports heme by-product coproporphyrin III (CPIII), and may be involved in their hepatic disposition. Mediates the uptake of other substrates such as prostaglandins D2 (PGD2), E1 (PGE1) and E2 (PGE2), taurocholate, L-thyroxine, leukotriene C4 and thromboxane B2. May contribute to regulate the transport of organic compounds in testis across the blood-testis-barrier. Shows a pH-sensitive substrate specificity which may be ascribed to the protonation state of the binding site and leads to a stimulation of substrate transport in an acidic microenvironment. The exact transport mechanism has not been yet deciphered but most likely involves an anion exchange, coupling the cellular uptake of organic substrate with the efflux of an anionic compound. Hydrogencarbonate/HCO3(-) acts as a probable counteranion that exchanges for organic anions. Cytoplasmic glutamate may also act as counteranion in the placenta. An inwardly directed proton gradient has also been proposed as the driving force of E1S uptake with a (H(+):E1S) stoichiometry of (1:1). The sequence is that of Solute carrier organic anion transporter family member 2B1 from Mus musculus (Mouse).